A 208-amino-acid polypeptide reads, in one-letter code: Uracil phosphoribosyltransferase (208 aa).

5-phospho-alpha-D-ribose 1-diphosphate contacts are provided by residues Arg-78, Arg-103, and 130–138 (DPMLATGGS). Residues Ile-193 and 198-200 (GDA) each bind uracil. Residue Asp-199 coordinates 5-phospho-alpha-D-ribose 1-diphosphate.

The protein belongs to the UPRTase family. Mg(2+) serves as cofactor.

The enzyme catalyses UMP + diphosphate = 5-phospho-alpha-D-ribose 1-diphosphate + uracil. It functions in the pathway pyrimidine metabolism; UMP biosynthesis via salvage pathway; UMP from uracil: step 1/1. Allosterically activated by GTP. In terms of biological role, catalyzes the conversion of uracil and 5-phospho-alpha-D-ribose 1-diphosphate (PRPP) to UMP and diphosphate. The polypeptide is Uracil phosphoribosyltransferase (Haemophilus influenzae (strain 86-028NP)).